A 112-amino-acid polypeptide reads, in one-letter code: Evasin P1095 (112 aa).

The first 23 residues, 1-23 (MELNAFTILQIAVFIAVGYHANT), serve as a signal peptide directing secretion. Intrachain disulfides connect Cys-48/Cys-66, Cys-52/Cys-68, and Cys-62/Cys-79. N-linked (GlcNAc...) asparagine glycosylation is present at Asn-51. The disordered stretch occupies residues 89–112 (GDPNDDPKINEATPQTQIFEKKRK).

It localises to the secreted. Salivary chemokine-binding protein which binds to host chemokine CXCL8. In Ixodes ricinus (Common tick), this protein is Evasin P1095.